Here is a 112-residue protein sequence, read N- to C-terminus: FK506-binding protein 1 (112 aa).

Over residues 1 to 10 the composition is skewed to polar residues; it reads MSAPATTQVE. The interval 1-20 is disordered; sequence MSAPATTQVEILQEGDGKTF. Positions 24-112 constitute a PPIase FKBP-type domain; the sequence is GDLVTIHYTG…LFDVELLNVN (89 aa).

This sequence belongs to the FKBP-type PPIase family. FKBP1 subfamily.

It is found in the cytoplasm. The enzyme catalyses [protein]-peptidylproline (omega=180) = [protein]-peptidylproline (omega=0). With respect to regulation, inhibited by both FK506 and rapamycin. PPIases accelerate the folding of proteins. It catalyzes the cis-trans isomerization of proline imidic peptide bonds in oligopeptides. In Debaryomyces hansenii (strain ATCC 36239 / CBS 767 / BCRC 21394 / JCM 1990 / NBRC 0083 / IGC 2968) (Yeast), this protein is FK506-binding protein 1 (FPR1).